Here is a 231-residue protein sequence, read N- to C-terminus: Probable transglycosylase SceD (231 aa).

The signal sequence occupies residues 1–27 (MKKTLLASSLAVGLGIVAGNAGHEAHA). Residues 93-116 (SAQAPATNNVEPSAVQANQVQSQE) are compositionally biased toward polar residues. The interval 93–152 (SAQAPATNNVEPSAVQANQVQSQEVEAPQNAQTQQPQASTSNNSQVTATPTESKASEGSS) is disordered. A compositionally biased stretch (low complexity) spans 119–137 (APQNAQTQQPQASTSNNSQ). Positions 138–152 (VTATPTESKASEGSS) are enriched in polar residues.

It belongs to the transglycosylase family. SceD subfamily.

Its subcellular location is the secreted. Functionally, is able to cleave peptidoglycan and affects clumping and separation of bacterial cells. The polypeptide is Probable transglycosylase SceD (sceD) (Staphylococcus aureus (strain Mu3 / ATCC 700698)).